Here is a 193-residue protein sequence, read N- to C-terminus: Acyl-homoserine-lactone synthase (193 aa).

It belongs to the autoinducer synthase family.

The enzyme catalyses a fatty acyl-[ACP] + S-adenosyl-L-methionine = an N-acyl-L-homoserine lactone + S-methyl-5'-thioadenosine + holo-[ACP] + H(+). Functionally, required for the synthesis of OHHL (N-(3-oxohexanoyl)-L-homoserine lactone) also known as VAI or N-(beta-ketocaproyl)homoserine lactone or 3-oxo-N-(tetrahydro-2-oxo-3-furanyl)-hexanamide, an autoinducer molecule which binds to LuxR and thus acts in bioluminescence regulation. The sequence is that of Acyl-homoserine-lactone synthase (luxI) from Aliivibrio fischeri (Vibrio fischeri).